Reading from the N-terminus, the 296-residue chain is MVNLDSLSLRSPAKLNLFLHIVGRRTDGYHLLQSVFQLIDWCDTLHLKRISENVVRRINPIPGVAPEHDLVVRAANLLKDFCQFEGGVEINLQKEIPMGAGMGGGSSDAATTLIGLNALWSLNLSKETLCALGLKLGADVPFFIFGKNAFVEGVGEKMREISLETPDFLVIFPNRGIATASIFQDPELTRDHAQITIDGFLTSPLLYQSNDCQAVAMRIYPEVKQALDWITQAVPGSQPRMSGSGSSVFAVLDSKTDIAKLKNFLQNLPKGWVGRVVRGLNKNPAYNLISFLQIDL.

The active site involves Lys-14. Residue 97–107 coordinates ATP; it reads PMGAGMGGGSS. Asp-139 is an active-site residue.

This sequence belongs to the GHMP kinase family. IspE subfamily.

The catalysed reaction is 4-CDP-2-C-methyl-D-erythritol + ATP = 4-CDP-2-C-methyl-D-erythritol 2-phosphate + ADP + H(+). It functions in the pathway isoprenoid biosynthesis; isopentenyl diphosphate biosynthesis via DXP pathway; isopentenyl diphosphate from 1-deoxy-D-xylulose 5-phosphate: step 3/6. Functionally, catalyzes the phosphorylation of the position 2 hydroxy group of 4-diphosphocytidyl-2C-methyl-D-erythritol. In Polynucleobacter necessarius subsp. necessarius (strain STIR1), this protein is 4-diphosphocytidyl-2-C-methyl-D-erythritol kinase.